Reading from the N-terminus, the 154-residue chain is Urease accessory protein UreE (154 aa).

The protein belongs to the UreE family.

It is found in the cytoplasm. Its function is as follows. Involved in urease metallocenter assembly. Binds nickel. Probably functions as a nickel donor during metallocenter assembly. This is Urease accessory protein UreE from Prochlorococcus marinus subsp. pastoris (strain CCMP1986 / NIES-2087 / MED4).